The following is a 600-amino-acid chain: Long-chain-fatty-acid--CoA ligase FadD15 (600 aa).

It belongs to the ATP-dependent AMP-binding enzyme family.

It carries out the reaction a long-chain fatty acid + ATP + CoA = a long-chain fatty acyl-CoA + AMP + diphosphate. The catalysed reaction is dodecanoate + ATP + CoA = dodecanoyl-CoA + AMP + diphosphate. It catalyses the reaction hexadecanoate + ATP + CoA = hexadecanoyl-CoA + AMP + diphosphate. It participates in lipid metabolism; fatty acid biosynthesis. In terms of biological role, catalyzes the activation of long-chain fatty acids as acyl-coenzyme A (acyl-CoA), which are then transferred to the multifunctional polyketide synthase (PKS) type III for further chain extension. This chain is Long-chain-fatty-acid--CoA ligase FadD15 (fadD15), found in Mycobacterium tuberculosis (strain ATCC 25618 / H37Rv).